A 260-amino-acid chain; its full sequence is Phosphonates import ATP-binding protein PhnC 2 (260 aa).

An ABC transporter domain is found at 4-245; sequence IQINKATKTY…KNTLRTIYQR (242 aa). ATP is bound at residue 37–44; the sequence is GPSGAGKS.

This sequence belongs to the ABC transporter superfamily. Phosphonates importer (TC 3.A.1.9.1) family. As to quaternary structure, the complex is composed of two ATP-binding proteins (PhnC), two transmembrane proteins (PhnE) and a solute-binding protein (PhnD).

Its subcellular location is the cell inner membrane. It catalyses the reaction phosphonate(out) + ATP + H2O = phosphonate(in) + ADP + phosphate + H(+). Functionally, part of the ABC transporter complex PhnCDE involved in phosphonates import. Responsible for energy coupling to the transport system. The polypeptide is Phosphonates import ATP-binding protein PhnC 2 (Trichodesmium erythraeum (strain IMS101)).